The chain runs to 66 residues: Large ribosomal subunit protein bL35 (66 aa).

2 stretches are compositionally biased toward basic residues: residues 1 to 15 and 24 to 40; these read MPKL…KRFK and HAQR…TKKQ. Residues 1–40 are disordered; that stretch reads MPKLKTKSGAKKRFKVTGTGKVMHAQRGKRHGMIKRTKKQ.

It belongs to the bacterial ribosomal protein bL35 family.

This chain is Large ribosomal subunit protein bL35, found in Bradyrhizobium sp. (strain ORS 278).